Reading from the N-terminus, the 473-residue chain is 3-oxoacyl-[acyl-carrier-protein] synthase I, chloroplastic (473 aa).

Polar residues predominate over residues 1–10 (MQALQSSSLR). The segment at 1 to 26 (MQALQSSSLRASPPNPLRLPSNRQSH) is disordered. A chloroplast-targeting transit peptide spans 1–46 (MQALQSSSLRASPPNPLRLPSNRQSHQLITNARPLRRQQRSFISAS). One can recognise a Ketosynthase family 3 (KS3) domain in the interval 60–470 (KKRVVITGMG…GHNSVVAFSA (411 aa)). Active-site for beta-ketoacyl synthase activity residues include Cys224, His364, and His400.

Belongs to the thiolase-like superfamily. Beta-ketoacyl-ACP synthases family. In terms of assembly, homodimer.

The protein resides in the plastid. Its subcellular location is the chloroplast stroma. It carries out the reaction a fatty acyl-[ACP] + malonyl-[ACP] + H(+) = a 3-oxoacyl-[ACP] + holo-[ACP] + CO2. In terms of biological role, catalyzes the condensation reaction of fatty acid synthesis by the addition to an acyl acceptor of two carbons from malonyl-ACP. Specific for elongation from C-10 to unsaturated C-16 and C-18 fatty acids. This chain is 3-oxoacyl-[acyl-carrier-protein] synthase I, chloroplastic (KAS1), found in Arabidopsis thaliana (Mouse-ear cress).